A 203-amino-acid polypeptide reads, in one-letter code: Selenocysteine-containing peroxiredoxin PrxU (203 aa).

Residues 2–160 (VSVGKKAPDF…TLRQIQAFQL (159 aa)) enclose the Thioredoxin domain. Residue U47 is part of the active site. A non-standard amino acid (selenocysteine) is located at residue U47.

It belongs to the peroxiredoxin family. AhpC/Prx1 subfamily.

It carries out the reaction a hydroperoxide + [thioredoxin]-dithiol = an alcohol + [thioredoxin]-disulfide + H2O. Its function is as follows. Thiol-specific peroxidase that catalyzes the reduction of hydrogen peroxide and organic hydroperoxides to water and alcohols, respectively. Plays a role in cell protection against oxidative stress by detoxifying peroxides. The chain is Selenocysteine-containing peroxiredoxin PrxU from Peptoclostridium acidaminophilum (Eubacterium acidaminophilum).